Consider the following 178-residue polypeptide: Protein GrpE (178 aa).

Positions 1-11 (MAEDQAPREET) are enriched in basic and acidic residues. A disordered region spans residues 1–30 (MAEDQAPREETVEAPELTEAPEIDELETLR).

This sequence belongs to the GrpE family. In terms of assembly, homodimer.

It localises to the cytoplasm. In terms of biological role, participates actively in the response to hyperosmotic and heat shock by preventing the aggregation of stress-denatured proteins, in association with DnaK and GrpE. It is the nucleotide exchange factor for DnaK and may function as a thermosensor. Unfolded proteins bind initially to DnaJ; upon interaction with the DnaJ-bound protein, DnaK hydrolyzes its bound ATP, resulting in the formation of a stable complex. GrpE releases ADP from DnaK; ATP binding to DnaK triggers the release of the substrate protein, thus completing the reaction cycle. Several rounds of ATP-dependent interactions between DnaJ, DnaK and GrpE are required for fully efficient folding. The protein is Protein GrpE of Cereibacter sphaeroides (strain ATCC 17023 / DSM 158 / JCM 6121 / CCUG 31486 / LMG 2827 / NBRC 12203 / NCIMB 8253 / ATH 2.4.1.) (Rhodobacter sphaeroides).